The sequence spans 120 residues: Meiosis expressed gene 1 protein homolog (120 aa).

Positions 1–45 (MDGLAIGGVSAPMTAERPQQVKKQLSRRTPDAADGRKPTRMERAK) are disordered. Over residues 28–45 (RTPDAADGRKPTRMERAK) the composition is skewed to basic and acidic residues.

Belongs to the MEIG1 family.

This Oxyrrhis marina (Dinoflagellate) protein is Meiosis expressed gene 1 protein homolog.